The sequence spans 39 residues: Photosystem II reaction center protein X (39 aa).

A helical membrane pass occupies residues W10–I30.

The protein belongs to the PsbX family. Type 1 subfamily. In terms of assembly, PSII is composed of 1 copy each of membrane proteins PsbA, PsbB, PsbC, PsbD, PsbE, PsbF, PsbH, PsbI, PsbJ, PsbK, PsbL, PsbM, PsbT, PsbX, PsbY, PsbZ, Psb30/Ycf12, peripheral proteins PsbO, CyanoQ (PsbQ), PsbU, PsbV and a large number of cofactors. It forms dimeric complexes.

The protein localises to the cellular thylakoid membrane. In terms of biological role, involved in the binding and/or turnover of quinones at the Q(B) site of photosystem II (PSII). PSII is a light-driven water plastoquinone oxidoreductase, using light energy to abstract electrons from H(2)O, generating a proton gradient subsequently used for ATP formation. In Microcystis aeruginosa (strain NIES-843 / IAM M-2473), this protein is Photosystem II reaction center protein X.